Consider the following 205-residue polypeptide: N-(5'-phosphoribosyl)anthranilate isomerase (205 aa).

Belongs to the TrpF family.

The catalysed reaction is N-(5-phospho-beta-D-ribosyl)anthranilate = 1-(2-carboxyphenylamino)-1-deoxy-D-ribulose 5-phosphate. Its pathway is amino-acid biosynthesis; L-tryptophan biosynthesis; L-tryptophan from chorismate: step 3/5. This is N-(5'-phosphoribosyl)anthranilate isomerase from Maridesulfovibrio salexigens (strain ATCC 14822 / DSM 2638 / NCIMB 8403 / VKM B-1763) (Desulfovibrio salexigens).